The sequence spans 334 residues: Anthranilate phosphoribosyltransferase (334 aa).

5-phospho-alpha-D-ribose 1-diphosphate contacts are provided by residues glycine 81, 84 to 85 (GD), threonine 89, 91 to 94 (NIST), 109 to 117 (KHGSRSVSS), and alanine 121. Anthranilate is bound at residue glycine 81. A Mg(2+)-binding site is contributed by serine 93. Arginine 167 is an anthranilate binding site. Positions 225 and 226 each coordinate Mg(2+).

The protein belongs to the anthranilate phosphoribosyltransferase family. Homodimer. Requires Mg(2+) as cofactor.

The enzyme catalyses N-(5-phospho-beta-D-ribosyl)anthranilate + diphosphate = 5-phospho-alpha-D-ribose 1-diphosphate + anthranilate. Its pathway is amino-acid biosynthesis; L-tryptophan biosynthesis; L-tryptophan from chorismate: step 2/5. In terms of biological role, catalyzes the transfer of the phosphoribosyl group of 5-phosphorylribose-1-pyrophosphate (PRPP) to anthranilate to yield N-(5'-phosphoribosyl)-anthranilate (PRA). This chain is Anthranilate phosphoribosyltransferase, found in Actinobacillus pleuropneumoniae serotype 7 (strain AP76).